We begin with the raw amino-acid sequence, 328 residues long: Transcription factor bHLH25 (328 aa).

Residues 125–152 are disordered; sequence PHQKSDEFNRKGTKRAQPFSRNQSNAQD. The 50-residue stretch at 148–197 folds into the bHLH domain; the sequence is SNAQDHIIAERKRREKLTQRFVALSALVPGLKKMDKASVLGDALKHIKYL.

In terms of assembly, homodimer. As to expression, expressed in flowers.

It is found in the nucleus. The chain is Transcription factor bHLH25 (BHLH25) from Arabidopsis thaliana (Mouse-ear cress).